The sequence spans 434 residues: 3-phosphoshikimate 1-carboxyvinyltransferase (434 aa).

Residues lysine 22, serine 23, and arginine 27 each contribute to the 3-phosphoshikimate site. Position 22 (lysine 22) interacts with phosphoenolpyruvate. Phosphoenolpyruvate contacts are provided by glycine 93 and arginine 121. Residues serine 168, serine 169, glutamine 170, serine 199, aspartate 320, and lysine 347 each contribute to the 3-phosphoshikimate site. A phosphoenolpyruvate-binding site is contributed by glutamine 170. Aspartate 320 (proton acceptor) is an active-site residue. Phosphoenolpyruvate-binding residues include arginine 351, arginine 394, and lysine 419.

The protein belongs to the EPSP synthase family. In terms of assembly, monomer.

The protein localises to the cytoplasm. It catalyses the reaction 3-phosphoshikimate + phosphoenolpyruvate = 5-O-(1-carboxyvinyl)-3-phosphoshikimate + phosphate. It participates in metabolic intermediate biosynthesis; chorismate biosynthesis; chorismate from D-erythrose 4-phosphate and phosphoenolpyruvate: step 6/7. Functionally, catalyzes the transfer of the enolpyruvyl moiety of phosphoenolpyruvate (PEP) to the 5-hydroxyl of shikimate-3-phosphate (S3P) to produce enolpyruvyl shikimate-3-phosphate and inorganic phosphate. The chain is 3-phosphoshikimate 1-carboxyvinyltransferase from Burkholderia cenocepacia (strain ATCC BAA-245 / DSM 16553 / LMG 16656 / NCTC 13227 / J2315 / CF5610) (Burkholderia cepacia (strain J2315)).